The sequence spans 898 residues: Zinc finger protein 574 (898 aa).

C2H2-type zinc fingers lie at residues 16 to 38 (YVCSECNQLYGSLEEVLVHQNSH), 76 to 98 (YQCLECGQLLLSPSQLLEHQELH), and 126 to 148 (YECVDCKALFASQEMWLSHRQTH). Ser-164 bears the Phosphoserine mark. A C2H2-type 4 zinc finger spans residues 213-235 (YKCSECSQLFQMPADFLEHQATH). The interval 243–305 (AEEPATQQET…PRRSSSGESG (63 aa)) is disordered. A compositionally biased stretch (basic and acidic residues) spans 273–290 (HSYELRNELRNGEAMGRD). Residue Ser-301 is modified to Phosphoserine. C2H2-type zinc fingers lie at residues 310–332 (LFCSACDQIFLSPHQLQQHLRSH), 337–359 (FKCPLCSRVFPSPSSLDQHLGDH), 365–387 (FLCVDCGLAFGTEALLLAHRRAH), and 393–414 (HSCPCGKTFVNLTKFLYHRRTH). The interval 417–460 (GGVPLPTTPVPPEEPAISFPEPAPAETGELEAPELPVSEESSAE) is disordered. C2H2-type zinc fingers lie at residues 467–490 (YRCLLCSREFSKALQLTRHQRFVH), 496–518 (HKCSICGKMFKKKSHVRNHLRTH), 524–546 (FPCPDCSKPFNSPANLARHRLTH), 552–574 (YRCGDCGKAFTQSSTLRQHRLVH), 580–602 (YRCQECGVRFHRPYRLLMHRYHH), and 608–631 (YKCRECPRSFLLRRLLEVHQLVVH). A C2H2-type 15; degenerate zinc finger spans residues 637-660 (HRCPSCGAAFPSSLRLREHRCAAA). The segment at 668–690 (FECGTCGKKVGSAARLQAHEAAH) adopts a C2H2-type 16 zinc-finger fold. The tract at residues 691–735 (AAAGPGEVLAKEPPAPRAARATRTPVAPSPTALGGTTSAAPAAPA) is disordered. Residues 707 to 734 (RAARATRTPVAPSPTALGGTTSAAPAAP) show a composition bias toward low complexity. Ser-719 bears the Phosphoserine mark. Residue Thr-726 is modified to Phosphothreonine. 4 consecutive C2H2-type zinc fingers follow at residues 740-762 (LECSECKKLFSTETSLQVHRRIH), 768-790 (YPCPDCGKAFRQSTHLKDHRRLH), 796-818 (FACEVCGKAFAISMRLAEHRRIH), and 824-846 (YSCPDCGKSYRSFSNLWKHRKTH). An Asymmetric dimethylarginine modification is found at Arg-834.

The protein belongs to the krueppel C2H2-type zinc-finger protein family.

Its subcellular location is the nucleus. Functionally, may be involved in transcriptional regulation. This chain is Zinc finger protein 574 (Znf574), found in Rattus norvegicus (Rat).